Consider the following 253-residue polypeptide: Claudin domain-containing protein 1 (253 aa).

Residues 5-25 traverse the membrane as a helical segment; sequence FATAFVIACVLSLISTIYMAA. 2 N-linked (GlcNAc...) asparagine glycosylation sites follow: N42 and N72. A run of 3 helical transmembrane segments spans residues 141 to 161, 175 to 195, and 216 to 236; these read FLLP…GLCA, ILHL…VAGI, and FCLA…FIWA.

Belongs to the PMP-22/EMP/MP20 family. As to expression, in the brain, highly expressed in endothelial cells of the cerebellum compared to other regions (at protein level).

The protein localises to the cell junction. The protein resides in the tight junction. It is found in the cell membrane. Plays a role in negatively regulating the permeability of cells to small molecules. The chain is Claudin domain-containing protein 1 (Cldnd1) from Mus musculus (Mouse).